The following is a 231-amino-acid chain: Uracil-DNA glycosylase (231 aa).

Aspartate 74 acts as the Proton acceptor in catalysis.

The protein belongs to the uracil-DNA glycosylase (UDG) superfamily. UNG family.

The protein resides in the cytoplasm. The enzyme catalyses Hydrolyzes single-stranded DNA or mismatched double-stranded DNA and polynucleotides, releasing free uracil.. Its function is as follows. Excises uracil residues from the DNA which can arise as a result of misincorporation of dUMP residues by DNA polymerase or due to deamination of cytosine. This chain is Uracil-DNA glycosylase, found in Campylobacter jejuni subsp. jejuni serotype O:2 (strain ATCC 700819 / NCTC 11168).